We begin with the raw amino-acid sequence, 267 residues long: tRNA pseudouridine synthase A (267 aa).

The active-site Nucleophile is the aspartate 53. Tyrosine 114 lines the substrate pocket.

The protein belongs to the tRNA pseudouridine synthase TruA family. In terms of assembly, homodimer.

The enzyme catalyses uridine(38/39/40) in tRNA = pseudouridine(38/39/40) in tRNA. Formation of pseudouridine at positions 38, 39 and 40 in the anticodon stem and loop of transfer RNAs. The sequence is that of tRNA pseudouridine synthase A from Chlamydia trachomatis serovar A (strain ATCC VR-571B / DSM 19440 / HAR-13).